Reading from the N-terminus, the 122-residue chain is uncharacterized protein (122 aa).

The next 2 membrane-spanning stretches (helical) occupy residues 36-56 (SVRS…YSQF) and 72-92 (AVFL…FSTD).

It localises to the membrane. This is an uncharacterized protein from Saccharomyces cerevisiae (strain ATCC 204508 / S288c) (Baker's yeast).